A 114-amino-acid chain; its full sequence is Iron-sulfur cluster insertion protein ErpA (114 aa).

Iron-sulfur cluster contacts are provided by Cys42, Cys106, and Cys108.

It belongs to the HesB/IscA family. As to quaternary structure, homodimer. It depends on iron-sulfur cluster as a cofactor.

Its function is as follows. Required for insertion of 4Fe-4S clusters for at least IspG. The sequence is that of Iron-sulfur cluster insertion protein ErpA from Erwinia tasmaniensis (strain DSM 17950 / CFBP 7177 / CIP 109463 / NCPPB 4357 / Et1/99).